The sequence spans 425 residues: Dihydroorotase (425 aa).

The Zn(2+) site is built by H61 and H63. Residues 63-65 (HLR) and N95 contribute to the substrate site. Residues D153, H180, and H233 each coordinate Zn(2+). N279 lines the substrate pocket. A Zn(2+)-binding site is contributed by D306. Residue D306 is part of the active site. Position 310 (H310) interacts with substrate.

This sequence belongs to the metallo-dependent hydrolases superfamily. DHOase family. Class I DHOase subfamily. Zn(2+) is required as a cofactor.

The enzyme catalyses (S)-dihydroorotate + H2O = N-carbamoyl-L-aspartate + H(+). The protein operates within pyrimidine metabolism; UMP biosynthesis via de novo pathway; (S)-dihydroorotate from bicarbonate: step 3/3. Its function is as follows. Catalyzes the reversible cyclization of carbamoyl aspartate to dihydroorotate. The polypeptide is Dihydroorotase (Trichlorobacter lovleyi (strain ATCC BAA-1151 / DSM 17278 / SZ) (Geobacter lovleyi)).